The primary structure comprises 153 residues: Ribosome maturation factor RimP (153 aa).

The protein belongs to the RimP family.

It localises to the cytoplasm. Required for maturation of 30S ribosomal subunits. This is Ribosome maturation factor RimP from Actinobacillus pleuropneumoniae serotype 5b (strain L20).